The following is a 342-amino-acid chain: Foldase protein PrsA (342 aa).

An N-terminal signal peptide occupies residues 1-22 (MVSVKKIVASALVGVLMFSAVG). Residue Cys-23 is the site of N-palmitoyl cysteine attachment. The S-diacylglycerol cysteine moiety is linked to residue Cys-23. Positions 189-284 (DSGVLTKHLL…FGYHIIQAGA (96 aa)) constitute a PpiC domain.

Belongs to the PrsA family.

It is found in the cell membrane. The catalysed reaction is [protein]-peptidylproline (omega=180) = [protein]-peptidylproline (omega=0). In terms of biological role, plays a major role in protein secretion by helping the post-translocational extracellular folding of several secreted proteins. This Clostridium perfringens (strain 13 / Type A) protein is Foldase protein PrsA.